The chain runs to 433 residues: Trigger factor (433 aa).

The PPIase FKBP-type domain maps to Gly-163–Pro-248.

This sequence belongs to the FKBP-type PPIase family. Tig subfamily.

The protein localises to the cytoplasm. The catalysed reaction is [protein]-peptidylproline (omega=180) = [protein]-peptidylproline (omega=0). Its function is as follows. Involved in protein export. Acts as a chaperone by maintaining the newly synthesized protein in an open conformation. Functions as a peptidyl-prolyl cis-trans isomerase. In Staphylococcus aureus (strain Newman), this protein is Trigger factor.